The chain runs to 409 residues: MQPPIPAPLKHVSRTPATPAVAKALTRLQCWPGEQRVAVGLSGGVDSSLSAALLVEAGWQVEGLTLWLMSGKGACCSDGLIDAAGICEQLKIPHHVVDSRATFQAEIVDQLVQGYQQGVTPLPCSRCNRSVKFAAMLSWAEKERQLHRVATGHYARIRHREDPEPQQALPGDSSGRHQLLRGLDQNKDQSYFLYDLSQDVLAKVIFPLGELTKAETRQEAERYGLRTAKKAESQDLCLADHYGSMKAFLDNYLPARQGEIVLQDGKVVGEHDGIEHFTIGQRKGLGVAWREPLHVVQLDATANRVIVAPRAEAGRDSCVVGAVNWISIAPPSSAIDVEVQVRYRSGPVAAQLIPIEATAEDIAADRPHRCRLTFNEEQFSITPGQAAVFYAADAVLGGGLIQQINTASS.

ATP contacts are provided by residues 40 to 47 and leucine 66; that span reads GLSGGVDS. The Nucleophile role is filled by cysteine 127. A disulfide bridge links cysteine 127 with cysteine 237. Glycine 152 provides a ligand contact to ATP. A disordered region spans residues 156–179; that stretch reads RIRHREDPEPQQALPGDSSGRHQL. The interaction with tRNA stretch occupies residues 187–189; the sequence is KDQ. The active-site Cysteine persulfide intermediate is the cysteine 237. The interval 342–343 is interaction with tRNA; the sequence is RY.

Belongs to the MnmA/TRMU family.

It is found in the cytoplasm. It catalyses the reaction S-sulfanyl-L-cysteinyl-[protein] + uridine(34) in tRNA + AH2 + ATP = 2-thiouridine(34) in tRNA + L-cysteinyl-[protein] + A + AMP + diphosphate + H(+). Its function is as follows. Catalyzes the 2-thiolation of uridine at the wobble position (U34) of tRNA, leading to the formation of s(2)U34. This Prochlorococcus marinus (strain MIT 9303) protein is tRNA-specific 2-thiouridylase MnmA.